We begin with the raw amino-acid sequence, 257 residues long: Small ribosomal subunit protein uS3 (257 aa).

Residues 40 to 110 enclose the KH type-2 domain; the sequence is IRKYLSTKYK…LVSLKVVEVQ (71 aa). Positions 223–257 are disordered; the sequence is ANKEFSRSSKPKKGSFNRSSRSKNTKPAPKQAVSE. The segment covering 231 to 246 has biased composition (basic residues); sequence SKPKKGSFNRSSRSKN.

The protein belongs to the universal ribosomal protein uS3 family. Part of the 30S ribosomal subunit. Forms a tight complex with proteins S10 and S14.

Binds the lower part of the 30S subunit head. Binds mRNA in the 70S ribosome, positioning it for translation. The protein is Small ribosomal subunit protein uS3 of Ureaplasma parvum serovar 3 (strain ATCC 27815 / 27 / NCTC 11736).